We begin with the raw amino-acid sequence, 539 residues long: Membrane protein insertase YidC (539 aa).

Helical transmembrane passes span 6 to 26, 341 to 361, 416 to 436, 454 to 474, and 495 to 515; these read TLLV…WQVA, SVIQ…TFIV, LGGC…YWAL, LSAQ…MFLI, and PVMF…YWLV.

The protein belongs to the OXA1/ALB3/YidC family. Type 1 subfamily. Interacts with the Sec translocase complex via SecD. Specifically interacts with transmembrane segments of nascent integral membrane proteins during membrane integration.

It is found in the cell inner membrane. Required for the insertion and/or proper folding and/or complex formation of integral membrane proteins into the membrane. Involved in integration of membrane proteins that insert both dependently and independently of the Sec translocase complex, as well as at least some lipoproteins. Aids folding of multispanning membrane proteins. The sequence is that of Membrane protein insertase YidC from Vibrio vulnificus (strain YJ016).